The primary structure comprises 903 residues: DNA mismatch repair protein MutS (903 aa).

Residue 655-662 (GPNMAGKS) coordinates ATP.

This sequence belongs to the DNA mismatch repair MutS family.

In terms of biological role, this protein is involved in the repair of mismatches in DNA. It is possible that it carries out the mismatch recognition step. This protein has a weak ATPase activity. This chain is DNA mismatch repair protein MutS, found in Caulobacter vibrioides (strain ATCC 19089 / CIP 103742 / CB 15) (Caulobacter crescentus).